The sequence spans 698 residues: Elongation factor G (698 aa).

Residues 10–285 (DKTRNIGIMA…AVVDYLPSPL (276 aa)) form the tr-type G domain. GTP contacts are provided by residues 19–26 (AHIDAGKT), 83–87 (DTPGH), and 137–140 (NKMD).

This sequence belongs to the TRAFAC class translation factor GTPase superfamily. Classic translation factor GTPase family. EF-G/EF-2 subfamily.

The protein localises to the cytoplasm. Functionally, catalyzes the GTP-dependent ribosomal translocation step during translation elongation. During this step, the ribosome changes from the pre-translocational (PRE) to the post-translocational (POST) state as the newly formed A-site-bound peptidyl-tRNA and P-site-bound deacylated tRNA move to the P and E sites, respectively. Catalyzes the coordinated movement of the two tRNA molecules, the mRNA and conformational changes in the ribosome. The chain is Elongation factor G from Lactiplantibacillus plantarum (strain ATCC BAA-793 / NCIMB 8826 / WCFS1) (Lactobacillus plantarum).